The primary structure comprises 154 residues: MLEAYEKAEPGPELEVTDRVVVSFDDRKKSRHRVTTERGVELGWFLERGLVLVDGEILKCTDGTFVRVCAADESVSDVHSDNTLLLTRAAYHLGNRHVPLEVGAGYLRYQHDHVLDDMVRGLGLHVAAARAPFNPENGAYHGTGGHHHHHHDHE.

The segment at 135–154 (PENGAYHGTGGHHHHHHDHE) is disordered. The segment covering 144 to 154 (GGHHHHHHDHE) has biased composition (basic residues).

It belongs to the UreE family.

It is found in the cytoplasm. Its function is as follows. Involved in urease metallocenter assembly. Binds nickel. Probably functions as a nickel donor during metallocenter assembly. The polypeptide is Urease accessory protein UreE (Teredinibacter turnerae (strain ATCC 39867 / T7901)).